The following is a 416-amino-acid chain: Squamosa promoter-binding-like protein 8 (416 aa).

The interval 11 to 53 (SSCDDFGYNATPPPPPSLLPIMDQDGGGGSIQRDHHHHHNHQQ) is disordered. The segment at 182 to 260 (PPRCQAEGCK…ADHNRRRRKS (79 aa)) adopts an SBP-type zinc-finger fold. Cys185, Cys190, Cys207, His210, Cys227, Cys230, His234, and Cys246 together coordinate Zn(2+). The Bipartite nuclear localization signal signature appears at 243-259 (KKSCRKRLADHNRRRRK). Residues 250 to 299 (LADHNRRRRKSKPSDGEHSGEKRRAQANKSAATKDKAGSSSKNAGIGDGF) are disordered. Positions 261–273 (KPSDGEHSGEKRR) are enriched in basic and acidic residues.

Expressed in stems, leaf sheaths, and young panicles.

The protein resides in the nucleus. Its function is as follows. Probable transcription factor that plays an important role in building the laminar joint between leaf blade and leaf sheath boundary, thereby controlling ligule and auricle development. The sequence is that of Squamosa promoter-binding-like protein 8 (SPL8) from Oryza sativa subsp. indica (Rice).